The sequence spans 32 residues: Ranatuerin-3 (32 aa).

A disulfide bond links cysteine 23 and cysteine 28.

This sequence belongs to the frog skin active peptide (FSAP) family. Ranatuerin subfamily. As to expression, expressed by the skin glands.

The protein localises to the secreted. In terms of biological role, antibacterial activity against Gram-positive bacterium S.aureus (MIC=60 uM). Shows no detectable hemolytic activity towards human erythrocytes. The sequence is that of Ranatuerin-3 from Aquarana catesbeiana (American bullfrog).